The sequence spans 103 residues: Large ribosomal subunit protein bL21 (103 aa).

It belongs to the bacterial ribosomal protein bL21 family. Part of the 50S ribosomal subunit. Contacts protein L20.

In terms of biological role, this protein binds to 23S rRNA in the presence of protein L20. The protein is Large ribosomal subunit protein bL21 of Desulforapulum autotrophicum (strain ATCC 43914 / DSM 3382 / VKM B-1955 / HRM2) (Desulfobacterium autotrophicum).